The sequence spans 1141 residues: Putative late blight resistance protein homolog R1B-13 (1141 aa).

Positions 417–437 (DSLAFLKNQIQVIQMEFEILQ) form a coiled coil. The region spanning 516-742 (TVITHTSSQL…LSIVLVADVL (227 aa)) is the NB-ARC domain. 5 LRR repeats span residues 826–851 (FKFL…PYLR), 869–894 (LWNL…VWDM), 992–1016 (APNL…TVDH), 1017–1041 (LKHL…VSNG), and 1043–1068 (FPQL…AFPI).

It belongs to the disease resistance NB-LRR family.

It localises to the cytoplasm. It is found in the membrane. Functionally, confers resistance to late blight (Phytophthora infestans) races carrying the avirulence gene Avr1. Resistance proteins guard the plant against pathogens that contain an appropriate avirulence protein via an indirect interaction with this avirulence protein. That triggers a defense system including the hypersensitive response, which restricts the pathogen growth. The sequence is that of Putative late blight resistance protein homolog R1B-13 (R1B-13) from Solanum demissum (Wild potato).